The primary structure comprises 72 residues: Small ribosomal subunit protein bS18c (72 aa).

It belongs to the bacterial ribosomal protein bS18 family. In terms of assembly, part of the 30S ribosomal subunit.

The protein resides in the plastid. It localises to the chloroplast. This chain is Small ribosomal subunit protein bS18c, found in Phaeodactylum tricornutum (strain CCAP 1055/1).